A 130-amino-acid chain; its full sequence is MSGRGKQGGKARAKAKSRSSRAGLQFPVGRVHRLLRKGNYAERVGAGAPVYLAAVLEYLTAEILELAGNAARDNKKTRIIPRHLQLAIRNDEELNKLLGKVTIAQGGVLPNIQAVLLPKKTESHHKAKGK.

Residues 1 to 22 (MSGRGKQGGKARAKAKSRSSRA) are disordered. Ser-2 carries the post-translational modification N-acetylserine. The residue at position 2 (Ser-2) is a Phosphoserine; by RPS6KA5. Arg-4 carries the citrulline; alternate modification. Arg-4 carries the post-translational modification Symmetric dimethylarginine; by PRMT5; alternate. Lys-6 is subject to N6-(2-hydroxyisobutyryl)lysine. Residues 7-19 (QGGKARAKAKSRS) are compositionally biased toward basic residues. Lys-10 carries the post-translational modification N6-(2-hydroxyisobutyryl)lysine; alternate. Lys-10 carries the N6-lactoyllysine; alternate modification. Residue Lys-10 is modified to N6-succinyllysine; alternate. Residues Lys-14 and Lys-16 each participate in a glycyl lysine isopeptide (Lys-Gly) (interchain with G-Cter in ubiquitin) cross-link. At Lys-37 the chain carries N6-(2-hydroxyisobutyryl)lysine; alternate. An N6-(beta-hydroxybutyryl)lysine; alternate modification is found at Lys-37. At Lys-37 the chain carries N6-crotonyllysine; alternate. An N6-(2-hydroxyisobutyryl)lysine mark is found at Lys-75 and Lys-76. Lys-96 carries the N6-(2-hydroxyisobutyryl)lysine; alternate modification. Position 96 is an N6-succinyllysine; alternate (Lys-96). Lys-96 is subject to N6-glutaryllysine; alternate. Lys-100 is modified (N6-glutaryllysine). At Gln-105 the chain carries N5-methylglutamine. N6-(2-hydroxyisobutyryl)lysine; alternate is present on Lys-119. N6-crotonyllysine; alternate is present on residues Lys-119 and Lys-120. Lys-119 and Lys-120 each carry N6-glutaryllysine; alternate. Lys-120 participates in a covalent cross-link: Glycyl lysine isopeptide (Lys-Gly) (interchain with G-Cter in ubiquitin); alternate. Residue Thr-121 is modified to Phosphothreonine; by DCAF1. Lys-126 carries the N6-crotonyllysine; alternate modification. Lys-126 carries the N6-glutaryllysine; alternate modification.

It belongs to the histone H2A family. As to quaternary structure, the nucleosome is a histone octamer containing two molecules each of H2A, H2B, H3 and H4 assembled in one H3-H4 heterotetramer and two H2A-H2B heterodimers. The octamer wraps approximately 147 bp of DNA. Interacts with VRK1; the interaction is mediated by the nucleosome acidic patch, a cluster of negatively charged residues of H2A and H2B forming a cleft within the nucleosome core. Deiminated on Arg-4 in granulocytes upon calcium entry. Post-translationally, monoubiquitination of Lys-120 (H2AK119Ub) by RING1, TRIM37 and RNF2/RING2 complex gives a specific tag for epigenetic transcriptional repression and participates in X chromosome inactivation of female mammals. It is involved in the initiation of both imprinted and random X inactivation. Ubiquitinated H2A is enriched in inactive X chromosome chromatin. Ubiquitination of H2A functions downstream of methylation of 'Lys-27' of histone H3 (H3K27me). H2AK119Ub by RNF2/RING2 can also be induced by ultraviolet and may be involved in DNA repair. Following DNA double-strand breaks (DSBs), it is ubiquitinated through 'Lys-63' linkage of ubiquitin moieties by the E2 ligase UBE2N and the E3 ligases RNF8 and RNF168, leading to the recruitment of repair proteins to sites of DNA damage. Ubiquitination at Lys-14 and Lys-16 (H2AK13Ub and H2AK15Ub, respectively) in response to DNA damage is initiated by RNF168 that mediates monoubiquitination at these 2 sites, and 'Lys-63'-linked ubiquitin are then conjugated to monoubiquitin; RNF8 is able to extend 'Lys-63'-linked ubiquitin chains in vitro. H2AK119Ub and ionizing radiation-induced 'Lys-63'-linked ubiquitination (H2AK13Ub and H2AK15Ub) are distinct events. In terms of processing, phosphorylation on Ser-2 (H2AS1ph) is enhanced during mitosis. Phosphorylation on Ser-2 by RPS6KA5/MSK1 directly represses transcription. Acetylation of H3 inhibits Ser-2 phosphorylation by RPS6KA5/MSK1. Phosphorylation at Thr-121 (H2AT120ph) by DCAF1 is present in the regulatory region of many tumor suppresor genes and down-regulates their transcription. Symmetric dimethylation on Arg-4 by the PRDM1/PRMT5 complex may play a crucial role in the germ-cell lineage. Post-translationally, glutamine methylation at Gln-105 (H2AQ104me) by FBL is specifically dedicated to polymerase I. It is present at 35S ribosomal DNA locus and impairs binding of the FACT complex. In terms of processing, crotonylation (Kcr) is specifically present in male germ cells and marks testis-specific genes in post-meiotic cells, including X-linked genes that escape sex chromosome inactivation in haploid cells. Crotonylation marks active promoters and enhancers and confers resistance to transcriptional repressors. It is also associated with post-meiotically activated genes on autosomes. Lactylated in macrophages by EP300/P300 by using lactoyl-CoA directly derived from endogenous or exogenous lactate, leading to stimulates gene transcription.

It is found in the nucleus. The protein localises to the chromosome. Core component of nucleosome. Nucleosomes wrap and compact DNA into chromatin, limiting DNA accessibility to the cellular machineries which require DNA as a template. Histones thereby play a central role in transcription regulation, DNA repair, DNA replication and chromosomal stability. DNA accessibility is regulated via a complex set of post-translational modifications of histones, also called histone code, and nucleosome remodeling. This is Histone H2A type 1 from Rattus norvegicus (Rat).